Here is an 86-residue protein sequence, read N- to C-terminus: MSRIAILLFVAFLLVAGISAKSTAHFKKNVLADLFKERRFNAKRDPAGSTCVNIDVDSFCDGMAERGACNIIPQMATNCAKACNSC.

Positions 1-20 are cleaved as a signal peptide; sequence MSRIAILLFVAFLLVAGISA. Positions 21–42 are excised as a propeptide; the sequence is KSTAHFKKNVLADLFKERRFNA. The region spanning 51–86 is the ShKT domain; that stretch reads CVNIDVDSFCDGMAERGACNIIPQMATNCAKACNSC. 3 disulfide bridges follow: C51/C86, C60/C79, and C69/C83.

The protein belongs to the sea anemone type 1 potassium channel toxin family. Type 1b subfamily.

It is found in the secreted. It localises to the nematocyst. Functionally, inhibits voltage-gated potassium channels (Kv1/KCNA). The protein is U-actitoxin-Avd10a of Anemonia viridis (Snakelocks anemone).